Here is a 249-residue protein sequence, read N- to C-terminus: 2-C-methyl-D-erythritol 4-phosphate cytidylyltransferase (249 aa).

Belongs to the IspD/TarI cytidylyltransferase family. IspD subfamily.

The enzyme catalyses 2-C-methyl-D-erythritol 4-phosphate + CTP + H(+) = 4-CDP-2-C-methyl-D-erythritol + diphosphate. Its pathway is isoprenoid biosynthesis; isopentenyl diphosphate biosynthesis via DXP pathway; isopentenyl diphosphate from 1-deoxy-D-xylulose 5-phosphate: step 2/6. Functionally, catalyzes the formation of 4-diphosphocytidyl-2-C-methyl-D-erythritol from CTP and 2-C-methyl-D-erythritol 4-phosphate (MEP). This Thermobifida fusca (strain YX) protein is 2-C-methyl-D-erythritol 4-phosphate cytidylyltransferase.